The chain runs to 842 residues: GPI ethanolamine phosphate transferase 2 (842 aa).

Asn186 carries an N-linked (GlcNAc...) asparagine glycan. The chain crosses the membrane as a helical span at residues 409–429 (YNYPLLFIGCFLSIVITGTIY). Asn441 carries an N-linked (GlcNAc...) asparagine glycan. 2 helical membrane passes run 442–462 (TSILIAIAALMGISVFGSSFI) and 468–488 (FWWWIITGLVLLSMVNLNFSS). Asn506 carries N-linked (GlcNAc...) asparagine glycosylation. A helical transmembrane segment spans residues 524 to 544 (GNIDALWWLNLITVTVVGLNL). A glycan (N-linked (GlcNAc...) asparagine) is linked at Asn551. A helical membrane pass occupies residues 554–574 (VSLLGFSDLLSMGLLSMITFL). N-linked (GlcNAc...) asparagine glycosylation occurs at Asn578. Helical transmembrane passes span 615-635 (IHTALIPLARIFFKLFFAVLV), 698-718 (YLLAVIFGIILQFFTFFQSGG), and 740-760 (IYVVGLMMCISNFAPTIYWSF). N-linked (GlcNAc...) asparagine glycosylation occurs at Asn771. The next 2 membrane-spanning stretches (helical) occupy residues 783-803 (YPFIIIQSTIGCCLLLACIIL) and 821-841 (MVWTIFVGIIVHWIPEILLLL).

This sequence belongs to the PIGG/PIGN/PIGO family. PIGG subfamily.

It is found in the endoplasmic reticulum membrane. It participates in glycolipid biosynthesis; glycosylphosphatidylinositol-anchor biosynthesis. Its function is as follows. Ethanolamine phosphate transferase involved in glycosylphosphatidylinositol-anchor biosynthesis. Transfers ethanolamine phosphate to the GPI second mannose. This is GPI ethanolamine phosphate transferase 2 (LAS21) from Candida glabrata (strain ATCC 2001 / BCRC 20586 / JCM 3761 / NBRC 0622 / NRRL Y-65 / CBS 138) (Yeast).